Reading from the N-terminus, the 72-residue chain is Aurein-2.5 (72 aa).

The N-terminal stretch at 1 to 22 is a signal peptide; that stretch reads MAFLKKSLFLVLFLGLVSLSIC. The propeptide occupies 23 to 49; it reads EKEKRQNEEDEDENEAANHEEGSEEKR. The segment at 27-47 is disordered; that stretch reads RQNEEDEDENEAANHEEGSEE. Basic and acidic residues predominate over residues 38–47; the sequence is AANHEEGSEE. Leu-65 is modified (leucine amide). The propeptide occupies 69 to 72; it reads NDLE.

Belongs to the frog skin active peptide (FSAP) family. Aurein subfamily. In terms of assembly, may be monomeric or may oligomerize as homodimers or homotrimers in Gram-positive and Gram-negative bacteria mimetic membranes. In terms of processing, C-terminal amidation enhances antibacterial activity. This increase may be due to stabilization of the alpha-helical structure at the membrane interface. In terms of tissue distribution, expressed by the skin dorsal glands.

It localises to the secreted. The protein resides in the target cell membrane. Amphipathic alpha-helical antimicrobial peptide with moderate to potent activity against Gram-positive bacteria, Gram-negative bacteria and fungi. Also shows a weak activity against biofilm of both Gram-positive and Gram-negative bacteria. Probably acts by disturbing membrane functions with its amphipathic structure. Kills fungi via membranolytic action. Enhanced sterol levels in lipid composition membranes reduce interaction of this peptide with membranes, having a protective effect against the lytic ability of the peptide. Shows anticancer activity. The chain is Aurein-2.5 from Ranoidea aurea (Green and golden bell frog).